The primary structure comprises 227 residues: Cytochrome c oxidase subunit 2 (227 aa).

Residues 1–14 (MAYPFQLGLQDATS) lie on the Mitochondrial intermembrane side of the membrane. The chain crosses the membrane as a helical span at residues 15-45 (PIMEELLHFHDHALMIVFLISSLVLYIISLM). Residues 46–59 (LTTKLTHTSTMDAQ) are Mitochondrial matrix-facing. A helical transmembrane segment spans residues 60-87 (EVETVWTILPAIILILIALPSLRILYMM). Over 88–227 (DEINNPSLTV…YFETWSALMV (140 aa)) the chain is Mitochondrial intermembrane. The Cu cation site is built by His161, Cys196, Glu198, Cys200, His204, and Met207. Residue Glu198 participates in Mg(2+) binding. Tyr218 carries the phosphotyrosine modification.

The protein belongs to the cytochrome c oxidase subunit 2 family. Component of the cytochrome c oxidase (complex IV, CIV), a multisubunit enzyme composed of 14 subunits. The complex is composed of a catalytic core of 3 subunits MT-CO1, MT-CO2 and MT-CO3, encoded in the mitochondrial DNA, and 11 supernumerary subunits COX4I, COX5A, COX5B, COX6A, COX6B, COX6C, COX7A, COX7B, COX7C, COX8 and NDUFA4, which are encoded in the nuclear genome. The complex exists as a monomer or a dimer and forms supercomplexes (SCs) in the inner mitochondrial membrane with NADH-ubiquinone oxidoreductase (complex I, CI) and ubiquinol-cytochrome c oxidoreductase (cytochrome b-c1 complex, complex III, CIII), resulting in different assemblies (supercomplex SCI(1)III(2)IV(1) and megacomplex MCI(2)III(2)IV(2)). Found in a complex with TMEM177, COA6, COX18, COX20, SCO1 and SCO2. Interacts with TMEM177 in a COX20-dependent manner. Interacts with COX20. Interacts with COX16. The cofactor is Cu cation.

Its subcellular location is the mitochondrion inner membrane. The enzyme catalyses 4 Fe(II)-[cytochrome c] + O2 + 8 H(+)(in) = 4 Fe(III)-[cytochrome c] + 2 H2O + 4 H(+)(out). In terms of biological role, component of the cytochrome c oxidase, the last enzyme in the mitochondrial electron transport chain which drives oxidative phosphorylation. The respiratory chain contains 3 multisubunit complexes succinate dehydrogenase (complex II, CII), ubiquinol-cytochrome c oxidoreductase (cytochrome b-c1 complex, complex III, CIII) and cytochrome c oxidase (complex IV, CIV), that cooperate to transfer electrons derived from NADH and succinate to molecular oxygen, creating an electrochemical gradient over the inner membrane that drives transmembrane transport and the ATP synthase. Cytochrome c oxidase is the component of the respiratory chain that catalyzes the reduction of oxygen to water. Electrons originating from reduced cytochrome c in the intermembrane space (IMS) are transferred via the dinuclear copper A center (CU(A)) of subunit 2 and heme A of subunit 1 to the active site in subunit 1, a binuclear center (BNC) formed by heme A3 and copper B (CU(B)). The BNC reduces molecular oxygen to 2 water molecules using 4 electrons from cytochrome c in the IMS and 4 protons from the mitochondrial matrix. The sequence is that of Cytochrome c oxidase subunit 2 (MT-CO2) from Canis aureus (Golden jackal).